Reading from the N-terminus, the 142-residue chain is Large ribosomal subunit protein uL11 (142 aa).

Belongs to the universal ribosomal protein uL11 family. Part of the ribosomal stalk of the 50S ribosomal subunit. Interacts with L10 and the large rRNA to form the base of the stalk. L10 forms an elongated spine to which L12 dimers bind in a sequential fashion forming a multimeric L10(L12)X complex. One or more lysine residues are methylated.

In terms of biological role, forms part of the ribosomal stalk which helps the ribosome interact with GTP-bound translation factors. This Liberibacter asiaticus (Citrus greening disease) protein is Large ribosomal subunit protein uL11.